We begin with the raw amino-acid sequence, 197 residues long: Phospholipid hydroperoxide glutathione peroxidase (197 aa).

Ser-40 bears the Phosphoserine mark. Sec-73 is a catalytic residue. Sec-73 is a non-standard amino acid (selenocysteine).

This sequence belongs to the glutathione peroxidase family. Monomer. Has a tendency to form higher mass oligomers. Interacts with FUNDC1; this interaction promotes GPX4 recruitment into mitochondria through TOM/TIM complex where it is degraded by mitophagy. In terms of tissue distribution, expressed in testis. Also expressed in liver, lung, kidney and spinal cord.

The protein resides in the mitochondrion. Its subcellular location is the cytoplasm. The catalysed reaction is a hydroperoxy polyunsaturated fatty acid + 2 glutathione = a hydroxy polyunsaturated fatty acid + glutathione disulfide + H2O. It catalyses the reaction 2 glutathione + H2O2 = glutathione disulfide + 2 H2O. It carries out the reaction tert-butyl hydroperoxide + 2 glutathione = tert-butanol + glutathione disulfide + H2O. The enzyme catalyses cumene hydroperoxide + 2 glutathione = 2-phenylpropan-2-ol + glutathione disulfide + H2O. The catalysed reaction is (9S)-hydroperoxy-(10E,12Z)-octadecadienoate + 2 glutathione = (9S)-hydroxy-(10E,12Z)-octadecadienoate + glutathione disulfide + H2O. It catalyses the reaction (13S)-hydroperoxy-(9Z,11E)-octadecadienoate + 2 glutathione = (13S)-hydroxy-(9Z,11E)-octadecadienoate + glutathione disulfide + H2O. It carries out the reaction (5S)-hydroperoxy-(6E,8Z,11Z,14Z)-eicosatetraenoate + 2 glutathione = (5S)-hydroxy-(6E,8Z,11Z,14Z)-eicosatetraenoate + glutathione disulfide + H2O. The enzyme catalyses (12R)-hydroperoxy-(5Z,8Z,10E,14Z)-eicosatetraenoate + 2 glutathione = (12R)-hydroxy-(5Z,8Z,10E,14Z)-eicosatetraenoate + glutathione disulfide + H2O. The catalysed reaction is (12S)-hydroperoxy-(5Z,8Z,10E,14Z)-eicosatetraenoate + 2 glutathione = (12S)-hydroxy-(5Z,8Z,10E,14Z)-eicosatetraenoate + glutathione disulfide + H2O. It catalyses the reaction (15S)-hydroperoxy-(5Z,8Z,11Z,13E)-eicosatetraenoate + 2 glutathione = (15S)-hydroxy-(5Z,8Z,11Z,13E)-eicosatetraenoate + glutathione disulfide + H2O. It carries out the reaction (5S)-hydroperoxy-(6E,8Z,11Z,14Z,17Z)-eicosapentaenoate + 2 glutathione = (5S)-hydroxy-(6E,8Z,11Z,14Z,17Z)-eicosapentaenoate + glutathione disulfide + H2O. The enzyme catalyses (12S)-hydroperoxy-(5Z,8Z,10E,14Z,17Z)-eicosapentaenoate + 2 glutathione = (12S)-hydroxy-(5Z,8Z,10E,14Z,17Z)-eicosapentaenoate + glutathione disulfide + H2O. The catalysed reaction is (15S)-hydroperoxy-(5Z,8Z,11Z,13E,17Z)-eicosapentaenoate + 2 glutathione = (15S)-hydroxy-(5Z,8Z,11Z,13E,17Z)-eicosapentaenoate + glutathione disulfide + H2O. It catalyses the reaction (15S)-hydroperoxy-(11Z,13E)-eicosadienoate + 2 glutathione = (15S)-hydroxy-(11Z,13E)-eicosadienoate + glutathione disulfide + H2O. It carries out the reaction (17S)-hydroperoxy-(4Z,7Z,10Z,13Z,15E,19Z)-docosahexaenoate + 2 glutathione = (17S)-hydroxy-(4Z,7Z,10Z,13Z,15E,19Z)-docosahexaenoate + glutathione disulfide + H2O. The enzyme catalyses a hydroperoxy-1,2-diacyl-glycero-3-phosphocholine + 2 glutathione = a hydroxy-1,2-diacyl-glycero-3-phosphocholine + glutathione disulfide + H2O. Essential antioxidant peroxidase that directly reduces phospholipid hydroperoxide even if they are incorporated in membranes and lipoproteins. Can also reduce fatty acid hydroperoxide, cholesterol hydroperoxide and thymine hydroperoxide. Plays a key role in protecting cells from oxidative damage by preventing membrane lipid peroxidation. Required to prevent cells from ferroptosis, a non-apoptotic cell death resulting from an iron-dependent accumulation of lipid reactive oxygen species. The presence of selenocysteine (Sec) versus Cys at the active site is essential for life: it provides resistance to overoxidation and prevents cells against ferroptosis. The presence of Sec at the active site is also essential for the survival of a specific type of parvalbumin-positive interneurons, thereby preventing against fatal epileptic seizures. May be required to protect cells from the toxicity of ingested lipid hydroperoxides. Required for normal sperm development and male fertility. Essential for maturation and survival of photoreceptor cells. Plays a role in a primary T-cell response to viral and parasitic infection by protecting T-cells from ferroptosis and by supporting T-cell expansion. Plays a role of glutathione peroxidase in platelets in the arachidonic acid metabolism. Reduces hydroperoxy ester lipids formed by a 15-lipoxygenase that may play a role as down-regulator of the cellular 15-lipoxygenase pathway. Can also reduce small soluble hydroperoxides such as H2O2, cumene hydroperoxide and tert-butyl hydroperoxide. This is Phospholipid hydroperoxide glutathione peroxidase from Callithrix jacchus (White-tufted-ear marmoset).